The sequence spans 667 residues: mRNA cap guanine-N(7) methyltransferase (667 aa).

Residues 1 to 19 (MYDPARDSWEERDGDEARS) are compositionally biased toward basic and acidic residues. The disordered stretch occupies residues 1 to 272 (MYDPARDSWE…RRRQEERERA (272 aa)). Polar residues predominate over residues 33 to 52 (FSSSEQIYGASGENNNTTDL). The segment covering 72–87 (SPPAQSTTQTPPSIST) has biased composition (low complexity). Positions 88–128 (HVQSPVNPAAQEASNTQSLTSAAQNQSNKSTTTMDNTSGSA) are enriched in polar residues. Over residues 132–142 (PRADPSDKSNR) the composition is skewed to basic and acidic residues. Residues 147-156 (ASPTDQNGSQ) show a composition bias toward polar residues. Residues 256–272 (LVDRETLRRRQEERERA) are compositionally biased toward basic and acidic residues. One can recognise an mRNA cap 0 methyltransferase domain in the interval 309-667 (SKIKGLRSFN…FYHAFCFYKV (359 aa)). 318–319 (NN) lines the mRNA pocket. S-adenosyl-L-methionine-binding positions include Lys322, Gly365, Asp389, Asp427, 470–472 (MFT), and Tyr475. Basic and acidic residues predominate over residues 521-535 (KKERQSQAKKEKTDE). The interval 521 to 547 (KKERQSQAKKEKTDEAPEDGEVEEDDG) is disordered. A compositionally biased stretch (acidic residues) spans 536 to 547 (APEDGEVEEDDG).

This sequence belongs to the class I-like SAM-binding methyltransferase superfamily. mRNA cap 0 methyltransferase family.

The protein resides in the nucleus. The enzyme catalyses a 5'-end (5'-triphosphoguanosine)-ribonucleoside in mRNA + S-adenosyl-L-methionine = a 5'-end (N(7)-methyl 5'-triphosphoguanosine)-ribonucleoside in mRNA + S-adenosyl-L-homocysteine. Responsible for methylating the 5'-cap structure of mRNAs. The chain is mRNA cap guanine-N(7) methyltransferase (abd1) from Neosartorya fischeri (strain ATCC 1020 / DSM 3700 / CBS 544.65 / FGSC A1164 / JCM 1740 / NRRL 181 / WB 181) (Aspergillus fischerianus).